The following is a 391-amino-acid chain: Histidinol-phosphate aminotransferase (391 aa).

K245 bears the N6-(pyridoxal phosphate)lysine mark.

This sequence belongs to the class-II pyridoxal-phosphate-dependent aminotransferase family. Histidinol-phosphate aminotransferase subfamily. Homodimer. The cofactor is pyridoxal 5'-phosphate.

The catalysed reaction is L-histidinol phosphate + 2-oxoglutarate = 3-(imidazol-4-yl)-2-oxopropyl phosphate + L-glutamate. It functions in the pathway amino-acid biosynthesis; L-histidine biosynthesis; L-histidine from 5-phospho-alpha-D-ribose 1-diphosphate: step 7/9. The chain is Histidinol-phosphate aminotransferase from Bifidobacterium adolescentis (strain ATCC 15703 / DSM 20083 / NCTC 11814 / E194a).